The chain runs to 115 residues: Parathyroid hormone (115 aa).

A signal peptide spans 1–25; the sequence is MMSAKDMVKVMIVMLAICFLARSDG. Positions 26 to 31 are excised as a propeptide; that stretch reads KSVKKR. An important for receptor binding region spans residues 51–69; sequence RVEWLRKKLQDVHNFVALG. A disordered region spans residues 77–99; sequence GSSQRPRKKEDNVLVESHQKSLG. Positions 84-99 are enriched in basic and acidic residues; the sequence is KKEDNVLVESHQKSLG.

The protein belongs to the parathyroid hormone family. In terms of assembly, interacts with PTH1R (via N-terminal extracellular domain).

The protein resides in the secreted. In terms of biological role, parathyroid hormone elevates calcium level by dissolving the salts in bone and preventing their renal excretion. Acts by binding to its receptor, PTH1R, activating G protein-coupled receptor signaling. Stimulates [1-14C]-2-deoxy-D-glucose (2DG) transport and glycogen synthesis in osteoblastic cells. This chain is Parathyroid hormone, found in Bos taurus (Bovine).